The following is a 361-amino-acid chain: Glyceraldehyde-3-phosphate dehydrogenase, glycosomal (361 aa).

NAD(+)-binding positions include 13 to 14 (RI), Asp-39, and Arg-93. D-glyceraldehyde 3-phosphate is bound by residues 166 to 168 (SCT), Thr-198, 227 to 228 (TG), and Arg-250. Catalysis depends on Cys-167, which acts as the Nucleophile. NAD(+) is bound at residue Asn-336. A Microbody targeting signal motif is present at residues 359 to 361 (SKL).

The protein belongs to the glyceraldehyde-3-phosphate dehydrogenase family. As to quaternary structure, homotetramer.

Its subcellular location is the glycosome. It carries out the reaction D-glyceraldehyde 3-phosphate + phosphate + NAD(+) = (2R)-3-phospho-glyceroyl phosphate + NADH + H(+). It functions in the pathway carbohydrate degradation; glycolysis; pyruvate from D-glyceraldehyde 3-phosphate: step 1/5. This Crithidia fasciculata protein is Glyceraldehyde-3-phosphate dehydrogenase, glycosomal (GAPDG).